The primary structure comprises 247 residues: DASH complex subunit DUO1 (247 aa).

Position 2 is an N-acetylserine (Ser-2). Disordered stretches follow at residues 27–47 and 172–247; these read LNNT…DNIS and NRKG…KMFR. Residues 152 to 180 adopt a coiled-coil conformation; it reads LHNVIALKKKEILDLRQKLENRKGEKDAA. A compositionally biased stretch (polar residues) spans 232–247; sequence NRWTKPTASSSRKMFR.

Belongs to the DASH complex DUO1 family. As to quaternary structure, component of the DASH complex consisting of ASK1, DAD1, DAD2, DAD3, DAD4, DAM1, DUO1, HSK3, SPC19 and SPC34, with a stoichiometry of one copy of each subunit per complex. Multiple DASH complexes oligomerize to form a ring that encircles spindle microtubules and organizes the rod-like NDC80 complexes of the outer kinetochore. DASH complex oligomerization strengthens microtubule attachments. On cytoplasmic microtubules, DASH complexes appear to form patches instead of rings. Within the complex, DAM1 and DUO1 may form the microtubule connections.

Its subcellular location is the nucleus. The protein resides in the cytoplasm. The protein localises to the cytoskeleton. It is found in the spindle pole. It localises to the chromosome. Its subcellular location is the centromere. The protein resides in the kinetochore. Functionally, component of the DASH complex that connects microtubules with kinetochores and couples microtubule depolymerisation to chromosome movement; it is involved in retrieving kinetochores to the spindle poles before their re-orientation on the spindle in early mitosis and allows microtubule depolymerization to pull chromosomes apart and resist detachment during anaphase. Kinetochores, consisting of a centromere-associated inner segment and a microtubule-contacting outer segment, play a crucial role in chromosome segregation by mediating the physical connection between centromeric DNA and microtubules. Kinetochores also serve as an input point for the spindle assembly checkpoint, which delays anaphase until all chromosomes have bioriented on the mitotic spindle. During spindle-kinetochore attachment, kinetochores first attach to the lateral surface of spindle microtubules, which supports the congression of chromosomes toward the middle of the dividing cell; they then slide along towards the spindle pole, a process independent of the DASH complex but requiring the NDC80 complex. When the end of a disassembling microtubule reaches the laterally attached kinetochore, the DASH complex together with the NDC80 complex and STU2 convert lateral attachment to end-on capture to produce a structure that can track with microtubule shortening and sustain attachment when tension is applied across sister kinetochores upon their biorientation. Microtubule depolymerization proceeds by protofilament splaying and induces the kinetochore-attached DASH complex to slide longitudinally, thereby helping to transduce depolymerization energy into pulling forces to disjoin chromatids. Incorrect microtubule attachments are corrected by releasing microubules from the kinetochore through phosphorylation by IPL1 of kinetochore components. Links the microtubule cytoskeleton to chromosomes during interphase. Also contributes to the poleward transport of kinetochores on microtubules following centromeric DNA replication in S-phase. The protein is DASH complex subunit DUO1 (DUO1) of Saccharomyces cerevisiae (strain ATCC 204508 / S288c) (Baker's yeast).